A 338-amino-acid polypeptide reads, in one-letter code: Probable replication factor C subunit 2 (338 aa).

60-67 (GPPGTGKT) lines the ATP pocket.

This sequence belongs to the activator 1 small subunits family. As to quaternary structure, heteropentamer of various rfc subunits that forms a complex (RFC) with PCNA in the presence of ATP.

It localises to the nucleus. The elongation of primed DNA templates by DNA polymerase delta and epsilon requires the action of the accessory proteins PCNA and activator 1. The sequence is that of Probable replication factor C subunit 2 (rfc2) from Dictyostelium discoideum (Social amoeba).